Reading from the N-terminus, the 144-residue chain is Large ribosomal subunit protein uL13 (144 aa).

Belongs to the universal ribosomal protein uL13 family. In terms of assembly, part of the 50S ribosomal subunit.

Its function is as follows. This protein is one of the early assembly proteins of the 50S ribosomal subunit, although it is not seen to bind rRNA by itself. It is important during the early stages of 50S assembly. In Clostridium botulinum (strain ATCC 19397 / Type A), this protein is Large ribosomal subunit protein uL13.